We begin with the raw amino-acid sequence, 128 residues long: Nascent polypeptide-associated complex protein (128 aa).

The NAC-A/B domain maps to 8–75 (PRMLKKMQKM…PKKIKKEKVE (68 aa)).

Belongs to the NAC-alpha family. Homodimer. Interacts with the ribosome. Binds ribosomal RNA.

Contacts the emerging nascent chain on the ribosome. In Methanocaldococcus jannaschii (strain ATCC 43067 / DSM 2661 / JAL-1 / JCM 10045 / NBRC 100440) (Methanococcus jannaschii), this protein is Nascent polypeptide-associated complex protein.